Reading from the N-terminus, the 860-residue chain is Endo-1,4-beta-xylanase B (860 aa).

The first 20 residues, 1–20 (MKFSSANKILFSGLVASANA), serve as a signal peptide directing secretion. The 304-residue stretch at 21 to 324 (YDLLKDYAGD…KPVYNTLLNI (304 aa)) folds into the GH10 domain. Glu-144 serves as the catalytic Proton donor. The Nucleophile role is filled by Glu-255. Cys-278 and Cys-284 are joined by a disulfide. N-linked (GlcNAc...) asparagine glycans are attached at residues Asn-295, Asn-309, Asn-359, and Asn-374. Polar residues-rich tracts occupy residues 330–362 (RPAS…NKSK) and 371–418 (LPGN…NSKT). Residues 330–793 (RPASSSAKTL…TKTLPGGACK (464 aa)) form a disordered region. Repeat 1 spans residues 375 to 382 (KSKTLPGG). Residues 375–782 (KSKTLPGGNS…GGKSKTLPGG (408 aa)) form a 47 X 8 AA tandem repeats of [SKN]-S-K-T-L-P-G-G region. Asn-390 carries N-linked (GlcNAc...) asparagine glycosylation. Repeat unit 2 spans residues 391–398 (KSKTLPGG). Residue Asn-406 is glycosylated (N-linked (GlcNAc...) asparagine). Repeat copies occupy residues 415–422 (NSKTLPGG), 431–438 (NSKTLPGG), 439–446 (KSKTLPGG), 447–454 (NSKTLPGG), 455–462 (KSKTLPGG), 463–470 (NSKTLPGG), 471–478 (SSKTLPGG), 479–486 (KSKTLPGG), 487–494 (NSKTLPGG), 495–502 (SSKTLPGG), 503–510 (KSKTLPGG), 511–518 (SSKTLPGG), 519–526 (KSKTLPGG), 527–534 (NSKTLPGG), 535–542 (NSKTLPGG), 543–550 (SSKTLPGG), 551–558 (KSKTLPGG), 559–566 (NSKTLPGG), 567–574 (SSKTLPGG), 575–582 (KSKTLPGG), 583–590 (NSKTLPGG), 591–598 (NSKTLPGG), 599–606 (KSKTLPGG), 607–614 (NSKTLPGG), 615–622 (SSKTLPGG), 623–630 (KSKTLPGG), 631–638 (SSKTLPGG), 639–646 (KSKTLPGG), 647–654 (NSKTLPGG), 655–662 (NSKTLPGG), 663–670 (SSKTLPGG), 671–678 (KSKTLPGG), 679–686 (SSKTLPGG), 687–694 (KSKTLPGG), 695–702 (NSKTLPGG), 703–710 (KSKTLPGG), 711–718 (NSKTLPGG), 719–726 (KSKTLPGG), 727–734 (NSKTLPGG), 735–742 (KSKTLPGG), 743–750 (NSKTLPGG), 751–758 (SSKTLPGG), 759–766 (KSKTLPGG), 767–774 (NSKTLPGG), and 775–782 (KSKTLPGG). 2 stretches are compositionally biased toward polar residues: residues 461–474 (GGNS…SSKT) and 485–498 (GGNS…SSKT). Composition is skewed to polar residues over residues 525–546 (GGNS…SSKT), 557–570 (GGNS…SSKT), 581–594 (GGNS…NSKT), and 605–618 (GGNS…SSKT). Positions 645-666 (GGNSKTLPGGNSKTLPGGSSKT) are enriched in polar residues. Over residues 741-754 (GGNSKTLPGGSSKT) the composition is skewed to polar residues. In terms of domain architecture, CBM1 spans 824–860 (NCAAKWGQCGGNGFNGPTCCQNGSRCQFVNEWYSQCL). Asn-845 carries N-linked (GlcNAc...) asparagine glycosylation.

The protein belongs to the glycosyl hydrolase 10 (cellulase F) family.

The protein resides in the secreted. It catalyses the reaction Endohydrolysis of (1-&gt;4)-beta-D-xylosidic linkages in xylans.. It participates in glycan degradation; xylan degradation. Endo-1,4-beta-xylanase involved in the hydrolysis of xylan, a major structural heterogeneous polysaccharide found in plant biomass representing the second most abundant polysaccharide in the biosphere, after cellulose. Hydrolyzes both unsubstituted (oat spelts) and highly substituted (rye and wheat) forms of arabinoxylanslans. The chain is Endo-1,4-beta-xylanase B (xynB) from Neocallimastix patriciarum (Rumen fungus).